Consider the following 354-residue polypeptide: Variable large protein 15/16 (354 aa).

Residues 1–18 (MRKRISAIIMTLFMVLVS) form the signal peptide. The N-palmitoyl cysteine moiety is linked to residue Cys19. Residue Cys19 is the site of S-diacylglycerol cysteine attachment. The tract at residues 333 to 354 (EDKSVEATNTAEATTSGQQAKN) is disordered. The span at 338-354 (EATNTAEATTSGQQAKN) shows a compositional bias: polar residues.

This sequence belongs to the variable large protein (Vlp) family. Delta subfamily.

The protein resides in the cell outer membrane. Its function is as follows. The Vlp and Vsp proteins are antigenically distinct proteins, only one vlp or vsp gene is transcriptionally active at any one time. Switching between these genes is a mechanism of host immune response evasion. In Borrelia hermsii, this protein is Variable large protein 15/16.